The following is a 282-amino-acid chain: 3-methyl-2-oxobutanoate hydroxymethyltransferase (282 aa).

Mg(2+) is bound by residues Asp-63 and Asp-102. 3-methyl-2-oxobutanoate-binding positions include Asp-63–Ser-64, Asp-102, and Lys-132. Residue Glu-134 participates in Mg(2+) binding. Catalysis depends on Glu-200, which acts as the Proton acceptor.

This sequence belongs to the PanB family. As to quaternary structure, homodecamer; pentamer of dimers. Requires Mg(2+) as cofactor.

The protein resides in the cytoplasm. The enzyme catalyses 3-methyl-2-oxobutanoate + (6R)-5,10-methylene-5,6,7,8-tetrahydrofolate + H2O = 2-dehydropantoate + (6S)-5,6,7,8-tetrahydrofolate. It functions in the pathway cofactor biosynthesis; (R)-pantothenate biosynthesis; (R)-pantoate from 3-methyl-2-oxobutanoate: step 1/2. Its function is as follows. Catalyzes the reversible reaction in which hydroxymethyl group from 5,10-methylenetetrahydrofolate is transferred onto alpha-ketoisovalerate to form ketopantoate. This is 3-methyl-2-oxobutanoate hydroxymethyltransferase from Mycobacterium sp. (strain JLS).